The following is a 595-amino-acid chain: Chaperone protein HscA homolog (595 aa).

The protein belongs to the heat shock protein 70 family.

Chaperone involved in the maturation of iron-sulfur cluster-containing proteins. Has a low intrinsic ATPase activity which is markedly stimulated by HscB. The protein is Chaperone protein HscA homolog of Rickettsia conorii (strain ATCC VR-613 / Malish 7).